Reading from the N-terminus, the 1067-residue chain is Mediator of RNA polymerase II transcription subunit 5 (1067 aa).

The protein belongs to the Mediator complex subunit 5 family. Component of the Mediator complex.

The protein resides in the nucleus. Functionally, component of the Mediator complex, a coactivator involved in the regulated transcription of nearly all RNA polymerase II-dependent genes. Mediator functions as a bridge to convey information from gene-specific regulatory proteins to the basal RNA polymerase II transcription machinery. Mediator is recruited to promoters by direct interactions with regulatory proteins and serves as a scaffold for the assembly of a functional preinitiation complex with RNA polymerase II and the general transcription factors. The chain is Mediator of RNA polymerase II transcription subunit 5 (NUT1) from Kluyveromyces lactis (strain ATCC 8585 / CBS 2359 / DSM 70799 / NBRC 1267 / NRRL Y-1140 / WM37) (Yeast).